Here is a 377-residue protein sequence, read N- to C-terminus: UDP-N,N'-diacetylbacillosamine 2-epimerase (hydrolyzing) (377 aa).

This sequence belongs to the UDP-N-acetylglucosamine 2-epimerase family.

It catalyses the reaction UDP-N,N'-diacetylbacillosamine + H2O = 2,4-diacetamido-2,4,6-trideoxy-alpha-D-mannopyranose + UDP + H(+). In terms of biological role, involved in biosynthesis of legionaminic acid (5,7-diamino-3,5,7,9-tetradeoxy-D-glycero-D-galacto-non-2-ulosonic acid)(Leg), a sialic acid-like derivative that is incorporated into virulence-associated cell surface glycoconjugates such as lipopolysaccharide (LPS) which could be a key determinant in the ability of L.pneumophila to inhibit the fusion of phagosomes with lysosomes. LPS contains a majority alpha2,4-linked homomer of legionaminic acid. Catalyzes the conversion of UDP-N,N'-diacetylbacillosamine (Bac2Ac4Ac) into 2,4-diacetamido-2,4,6-trideoxymannose and UDP. This is UDP-N,N'-diacetylbacillosamine 2-epimerase (hydrolyzing) from Legionella pneumophila subsp. pneumophila (strain Philadelphia 1 / ATCC 33152 / DSM 7513).